The primary structure comprises 211 residues: Thymidylate kinase (211 aa).

Residue 7–14 (GMDGSGKT) coordinates ATP.

It belongs to the thymidylate kinase family.

It carries out the reaction dTMP + ATP = dTDP + ADP. Phosphorylation of dTMP to form dTDP in both de novo and salvage pathways of dTTP synthesis. The polypeptide is Thymidylate kinase (Mesoplasma florum (strain ATCC 33453 / NBRC 100688 / NCTC 11704 / L1) (Acholeplasma florum)).